Consider the following 382-residue polypeptide: Methylthioribose-1-phosphate isomerase (382 aa).

D257 (proton donor) is an active-site residue.

Belongs to the eIF-2B alpha/beta/delta subunits family. MtnA subfamily.

It is found in the cytoplasm. Its subcellular location is the nucleus. It carries out the reaction 5-(methylsulfanyl)-alpha-D-ribose 1-phosphate = 5-(methylsulfanyl)-D-ribulose 1-phosphate. It functions in the pathway amino-acid biosynthesis; L-methionine biosynthesis via salvage pathway; L-methionine from S-methyl-5-thio-alpha-D-ribose 1-phosphate: step 1/6. In terms of biological role, catalyzes the interconversion of methylthioribose-1-phosphate (MTR-1-P) into methylthioribulose-1-phosphate (MTRu-1-P). In Paracoccidioides brasiliensis (strain Pb18), this protein is Methylthioribose-1-phosphate isomerase.